An 85-amino-acid polypeptide reads, in one-letter code: Metallothionein-like protein 4B (85 aa).

The disordered stretch occupies residues 1–20 (MADTGKGSASASCNDRCGCP).

Belongs to the metallothionein superfamily. Type 15 family. In terms of tissue distribution, expressed specifically in seeds.

It localises to the cytoplasm. The protein resides in the nucleus. Its subcellular location is the cell membrane. In terms of biological role, metallothioneins have a high content of cysteine residues that bind various heavy metals. Functions as a metal chelator of copper (Cu) and zinc (Zn). Plays a role in storing and distributing Zn ion in seed. The sequence is that of Metallothionein-like protein 4B (MT4B) from Arabidopsis thaliana (Mouse-ear cress).